The sequence spans 145 residues: Large ribosomal subunit protein uL11 (145 aa).

The protein belongs to the universal ribosomal protein uL11 family. As to quaternary structure, part of the ribosomal stalk of the 50S ribosomal subunit. Interacts with L10 and the large rRNA to form the base of the stalk. L10 forms an elongated spine to which L12 dimers bind in a sequential fashion forming a multimeric L10(L12)X complex. One or more lysine residues are methylated.

Its function is as follows. Forms part of the ribosomal stalk which helps the ribosome interact with GTP-bound translation factors. The polypeptide is Large ribosomal subunit protein uL11 (Porphyromonas gingivalis (strain ATCC 33277 / DSM 20709 / CIP 103683 / JCM 12257 / NCTC 11834 / 2561)).